Reading from the N-terminus, the 567-residue chain is TGF-beta receptor type-2 (567 aa).

The first 22 residues, 1–22, serve as a signal peptide directing secretion; that stretch reads MGRGLLRGLWPLHIVLWTRIAS. At 23-166 the chain is on the extracellular side; sequence TIPPHVQKSV…NPDLLLVIFQ (144 aa). 6 disulfides stabilise this stretch: cysteine 51–cysteine 84, cysteine 54–cysteine 71, cysteine 61–cysteine 67, cysteine 77–cysteine 101, cysteine 121–cysteine 136, and cysteine 138–cysteine 143. N-linked (GlcNAc...) asparagine glycans are attached at residues asparagine 70 and asparagine 94. Residue asparagine 154 is glycosylated (N-linked (GlcNAc...) asparagine). Residues 167 to 187 form a helical membrane-spanning segment; sequence VTGISLLPPLGVAISVIIIFY. Over 188-567 the chain is Cytoplasmic; the sequence is CYRVNRQQKL…PEDGSLNTTK (380 aa). The Protein kinase domain maps to 244-544; that stretch reads IELDTLVGKG…AERFSELEHL (301 aa). Residues 250-258 and lysine 277 each bind ATP; that span reads VGKGRFAEV. Aspartate 379 (proton acceptor) is an active-site residue. Phosphoserine is present on residues serine 409, serine 548, and serine 553. The segment at 439-567 is sufficient for interaction with CLU; that stretch reads VESFKQTDVY…PEDGSLNTTK (129 aa).

It belongs to the protein kinase superfamily. TKL Ser/Thr protein kinase family. TGFB receptor subfamily. As to quaternary structure, homodimer. Heterohexamer; TGFB1, TGFB2 and TGFB3 homodimeric ligands assemble a functional receptor composed of two TGFBR1 and TGFBR2 heterodimers to form a ligand-receptor heterohexamer. The respective affinity of TGFRB1 and TGFRB2 for the ligands may modulate the kinetics of assembly of the receptor and may explain the different biological activities of TGFB1, TGFB2 and TGFB3. Component of a complex composed of TSC22D1 (via N-terminus), TGFBR1 and TGFBR2; the interaction between TSC22D1 and TGFBR1 is inhibited by SMAD7 and promoted by TGFB1. Interacts with DAXX. Interacts with DYNLT4. Interacts with ZFYVE9; ZFYVE9 recruits SMAD2 and SMAD3 to the TGF-beta receptor. Interacts with and is activated by SCUBE3; this interaction does not affect TGFB1-binding to TGFBR2. Interacts with VPS39; this interaction is independent of the receptor kinase activity and of the presence of TGF-beta. Interacts with CLU. Homodimer; disulfide-linked. Mg(2+) is required as a cofactor. Mn(2+) serves as cofactor. In terms of processing, phosphorylated on a Ser/Thr residue in the cytoplasmic domain.

It is found in the cell membrane. The protein localises to the membrane raft. The protein resides in the secreted. The catalysed reaction is L-threonyl-[receptor-protein] + ATP = O-phospho-L-threonyl-[receptor-protein] + ADP + H(+). It catalyses the reaction L-seryl-[receptor-protein] + ATP = O-phospho-L-seryl-[receptor-protein] + ADP + H(+). In terms of biological role, transmembrane serine/threonine kinase forming with the TGF-beta type I serine/threonine kinase receptor, TGFBR1, the non-promiscuous receptor for the TGF-beta cytokines TGFB1, TGFB2 and TGFB3. Transduces the TGFB1, TGFB2 and TGFB3 signal from the cell surface to the cytoplasm and thus regulates a plethora of physiological and pathological processes including cell cycle arrest in epithelial and hematopoietic cells, control of mesenchymal cell proliferation and differentiation, wound healing, extracellular matrix production, immunosuppression and carcinogenesis. The formation of the receptor complex composed of 2 TGFBR1 and 2 TGFBR2 molecules symmetrically bound to the cytokine dimer results in the phosphorylation and activation of TGFBR1 by the constitutively active TGFBR2. Activated TGFBR1 phosphorylates SMAD2 which dissociates from the receptor and interacts with SMAD4. The SMAD2-SMAD4 complex is subsequently translocated to the nucleus where it modulates the transcription of the TGF-beta-regulated genes. This constitutes the canonical SMAD-dependent TGF-beta signaling cascade. Also involved in non-canonical, SMAD-independent TGF-beta signaling pathways. Functionally, has transforming growth factor beta-activated receptor activity. Binds TGFB1, TGFB2 and TGFB3 in the picomolar affinity range without the participation of additional receptors. Blocks activation of SMAD2 and SMAD3 by TGFB1. The polypeptide is TGF-beta receptor type-2 (TGFBR2) (Homo sapiens (Human)).